Reading from the N-terminus, the 134-residue chain is Cytochrome b5 (134 aa).

An N-acetylalanine modification is found at A2. N6-acetyllysine is present on residues K7, K10, and K19. One can recognise a Cytochrome b5 heme-binding domain in the interval 9 to 85 (VKYYTLEEIQ…SKTYIIGELH (77 aa)). Heme is bound by residues H44 and H68. Residues 109-131 (WWTNWVIPAISALVVALMYRLYM) traverse the membrane as a helical segment.

This sequence belongs to the cytochrome b5 family.

It localises to the endoplasmic reticulum membrane. The protein localises to the microsome membrane. In terms of biological role, cytochrome b5 is a membrane-bound hemoprotein functioning as an electron carrier for several membrane-bound oxygenases. It is also involved in several steps of the sterol biosynthesis pathway, particularly in the C-6 double bond introduction during the C-6 desaturation. This chain is Cytochrome b5 (Cyb5a), found in Rattus norvegicus (Rat).